The sequence spans 1148 residues: Transcription-repair-coupling factor (1148 aa).

One can recognise a Helicase ATP-binding domain in the interval 615–776 (DMCQPLAMDR…MSGMRDLSII (162 aa)). Position 628-635 (628-635 (GDVGFGKT)) interacts with ATP. The DEEH box signature appears at 729 to 732 (DEEH). The region spanning 798-951 (VREAILREIL…GFALATHDLE (154 aa)) is the Helicase C-terminal domain.

In the N-terminal section; belongs to the UvrB family. The protein in the C-terminal section; belongs to the helicase family. RecG subfamily. Monomer. Interacts with UvrA and RNAP.

Its subcellular location is the cytoplasm. Its function is as follows. Couples transcription and DNA repair by recognizing RNA polymerase (RNAP) stalled at DNA lesions. Mediates ATP-dependent release of RNAP and its truncated transcript from the DNA, and recruitment of nucleotide excision repair machinery to the damaged site. Can also dissociate RNAP that is blocked by low concentration of nucleoside triphosphates or by physical obstruction, such as bound proteins. In addition, can rescue arrested complexes by promoting forward translocation. Has ATPase activity, which is required for removal of stalled RNAP, but seems to lack helicase activity. May act through a translocase activity that rewinds upstream DNA, leading either to translocation or to release of RNAP when the enzyme active site cannot continue elongation. This chain is Transcription-repair-coupling factor, found in Escherichia coli (strain K12).